The following is a 551-amino-acid chain: E3 ubiquitin-protein ligase TRIM8 (551 aa).

The segment at 15–56 (CPICLHVFVEPVQLPCKHNFCRGCIGEAWAKDSGLVRCPECN) adopts an RING-type zinc-finger fold. 2 consecutive B box-type zinc fingers follow at residues 92–132 (CVFC…ARGH) and 140–182 (VRAW…VCDV). Coiled-coil stretches lie at residues 181 to 249 (DVEI…DLRQ) and 274 to 295 (ERMQ…KTED). Residues 399–457 (QYGAAGTASSEGQSGQPLGPCSSTQHLVALPGGTQPVHSSPVFPPSQYPNGSTTQQPML) form a disordered region. 2 stretches are compositionally biased toward polar residues: residues 405-424 (TASS…STQH) and 446-456 (YPNGSTTQQPM).

It belongs to the TRIM/RBCC family. Homodimer. Interacts with SOCS1 (via) SH2 domain and SOCS box. Interacts with HSP90AB1; prevents nucleus translocation of phosphorylated STAT3 and HSP90AB1. Interacts with MAP3K7/TAK1. Interacts with PIAS3. Interacts with TICAM1. Interacts with TRIM15; this interaction prevents TRIM8 cytoplasmic translocation. As to expression, high expression in heart, liver, and thymus. Expressed in embryonic CNS, kidney, lens and gut.

The enzyme catalyses S-ubiquitinyl-[E2 ubiquitin-conjugating enzyme]-L-cysteine + [acceptor protein]-L-lysine = [E2 ubiquitin-conjugating enzyme]-L-cysteine + N(6)-ubiquitinyl-[acceptor protein]-L-lysine.. The protein operates within protein modification; protein ubiquitination. Functionally, E3 ubiquitin-protein ligase that participates in multiple biological processes including cell survival, differentiation, apoptosis, and in particular, the innate immune response. Participates in the activation of interferon-gamma signaling by promoting proteasomal degradation of the repressor SOCS1. Plays a positive role in the TNFalpha and IL-1beta signaling pathways. Mechanistically, induces the 'Lys-63'-linked polyubiquitination of MAP3K7/TAK1 component leading to the activation of NF-kappa-B. Also modulates STAT3 activity through negative regulation of PIAS3, either by degradation of PIAS3 through the ubiquitin-proteasome pathway or exclusion of PIAS3 from the nucleus. Negatively regulates TLR3/4-mediated innate immune response by catalyzing 'Lys-6'- and 'Lys-33'-linked polyubiquitination of TICAM1 and thereby disrupting the TICAM1-TBK1 interaction. The protein is E3 ubiquitin-protein ligase TRIM8 (Trim8) of Mus musculus (Mouse).